Consider the following 733-residue polypeptide: Alpha-galactosidase 1 (733 aa).

Asp-480 functions as the Nucleophile in the catalytic mechanism. Catalysis depends on Asp-550, which acts as the Proton donor.

It belongs to the glycosyl hydrolase 36 family.

The enzyme catalyses Hydrolysis of terminal, non-reducing alpha-D-galactose residues in alpha-D-galactosides, including galactose oligosaccharides, galactomannans and galactolipids.. Functionally, alpha-galactosidase associated with the raffinose operon. The polypeptide is Alpha-galactosidase 1 (agaR) (Pediococcus pentosaceus).